Reading from the N-terminus, the 22-residue chain is Mu-conotoxin GIIIC (22 aa).

3 disulfide bridges follow: C3–C15, C4–C20, and C10–C21. Residues P6, P7, and P17 each carry the 4-hydroxyproline modification. A22 is modified (alanine amide).

The protein belongs to the conotoxin M superfamily. In terms of tissue distribution, expressed by the venom duct.

The protein localises to the secreted. Mu-conotoxins block voltage-gated sodium channels (Nav). This toxin shows potent activity on Nav1.4/SCN4A (IC(50)=286 nM), and weak activity on mNav1.6/SCN8A. The polypeptide is Mu-conotoxin GIIIC (Conus geographus (Geography cone)).